Reading from the N-terminus, the 317-residue chain is NADH kinase (317 aa).

This sequence belongs to the NAD kinase family. In terms of assembly, homodimer. Ubiquitous.

The protein localises to the cytoplasm. It catalyses the reaction NADH + ATP = ADP + NADPH + H(+). With respect to regulation, two-fold decrease in activity in the presence of PPi, iodoacetate or para-chloromercuribenzoate. In terms of biological role, phosphorylates specifically NADH. Can phosphorylate NAD with a 100-fold decrease in efficiency compared to NADH. Prefers ATP as nucleoside triphosphate substrate. Can also utilize UTP, GTP and CTP. Key source of the cellular reductant NADPH which is an important antioxidant factor. This is NADH kinase (NADK3) from Arabidopsis thaliana (Mouse-ear cress).